The primary structure comprises 179 residues: ADP-ribosylation factor-like protein 5B (179 aa).

G2 carries N-myristoyl glycine lipidation. GTP is bound by residues 23 to 30, 66 to 70, 125 to 128, and A159; these read GLDNAGKT, DIGGQ, and NKQD.

This sequence belongs to the small GTPase superfamily. Arf family.

Binds and exchanges GTP and GDP. This chain is ADP-ribosylation factor-like protein 5B (Arl5b), found in Mus musculus (Mouse).